The primary structure comprises 360 residues: Ribosomal RNA large subunit methyltransferase M (360 aa).

Residues Ser-187, 220–223 (CPGG), Asp-239, Asp-259, and Asp-276 each bind S-adenosyl-L-methionine. Lys-305 acts as the Proton acceptor in catalysis.

Belongs to the class I-like SAM-binding methyltransferase superfamily. RNA methyltransferase RlmE family. RlmM subfamily. As to quaternary structure, monomer.

Its subcellular location is the cytoplasm. It carries out the reaction cytidine(2498) in 23S rRNA + S-adenosyl-L-methionine = 2'-O-methylcytidine(2498) in 23S rRNA + S-adenosyl-L-homocysteine + H(+). Functionally, catalyzes the 2'-O-methylation at nucleotide C2498 in 23S rRNA. This Photobacterium profundum (strain SS9) protein is Ribosomal RNA large subunit methyltransferase M.